The chain runs to 763 residues: Glycerophosphodiester phosphodiesterase GDPDL1 (763 aa).

The N-terminal stretch at M1 to A35 is a signal peptide. Topologically, residues Q36–Q744 are extracellular. The region spanning P50 to V350 is the GP-PDE 1 domain. 10 N-linked (GlcNAc...) asparagine glycosylation sites follow: N105, N192, N248, N257, N315, N359, N430, N534, N547, and N654. Positions F366–K668 constitute a GP-PDE 2 domain. The helical transmembrane segment at T745–L762 threads the bilayer. Residue L763 is a topological domain, cytoplasmic.

Belongs to the glycerophosphoryl diester phosphodiesterase family. The cofactor is Ca(2+). Expressed in rosette and cauline leaves, stems, flowers and siliques.

The protein localises to the cell membrane. The catalysed reaction is a sn-glycero-3-phosphodiester + H2O = an alcohol + sn-glycerol 3-phosphate + H(+). Functionally, hydrolyzes glycerolphosphoglycerol, glycerophosphocholine and glycerophosphoethanolamine in vitro. This chain is Glycerophosphodiester phosphodiesterase GDPDL1, found in Arabidopsis thaliana (Mouse-ear cress).